Consider the following 199-residue polypeptide: Transgelin-2 (199 aa).

At A2 the chain carries N-acetylalanine. S11 carries the phosphoserine modification. 2 positions are modified to N6-acetyllysine: K17 and K20. A Calponin-homology (CH) domain is found at 24 to 136; the sequence is ADLEQILIQW…RTLMNLGGLA (113 aa). The residue at position 163 (S163) is a Phosphoserine. K171 participates in a covalent cross-link: Glycyl lysine isopeptide (Lys-Gly) (interchain with G-Cter in SUMO2). One copy of the Calponin-like repeat lies at 174-199; the sequence is IGLQMGTNRGASQAGMTGYGMPRQIL. T180 carries the phosphothreonine modification. R182 and R196 each carry omega-N-methylarginine.

It belongs to the calponin family. In terms of tissue distribution, expressed in epididymis (at protein level).

The protein is Transgelin-2 (TAGLN2) of Homo sapiens (Human).